Here is a 189-residue protein sequence, read N- to C-terminus: Ras-like protein 1 (189 aa).

10-17 (GAGGVGKS) lines the GTP pocket. Residues 32-40 (YDPTIEDSY) carry the Effector region motif. GTP contacts are provided by residues 57 to 61 (DTAGQ) and 116 to 119 (NKCD). Cys186 carries the cysteine methyl ester modification. The S-geranylgeranyl cysteine moiety is linked to residue Cys186. Residues 187–189 (KML) constitute a propeptide, removed in mature form.

It belongs to the small GTPase superfamily. Ras family.

The protein localises to the cell membrane. It carries out the reaction GTP + H2O = GDP + phosphate + H(+). Its activity is regulated as follows. Alternates between an inactive form bound to GDP and an active form bound to GTP. Activated by a guanine nucleotide-exchange factor (GEF) and inactivated by a GTPase-activating protein (GAP). Its function is as follows. Ras proteins bind GDP/GTP and possess intrinsic GTPase activity. Plays a role in eye development by regulating cell growth, survival of postmitotic ommatidial cells and differentiation of photoreceptor cells. During larval development, mediates Ptth/tor signaling leading to the production of ecdysone, a hormone required for the initiation of metamorphosis. The polypeptide is Ras-like protein 1 (Drosophila willistoni (Fruit fly)).